Reading from the N-terminus, the 1046-residue chain is Arrestin-related trafficking adapter 3 (1046 aa).

The interval 115-141 is disordered; it reads YPPTEQKSKKKMDASAPNESNNAANNF. The segment covering 128-140 has biased composition (low complexity); it reads ASAPNESNNAANN. Phosphoserine occurs at positions 155 and 162. Low complexity-rich tracts occupy residues 168 to 179 and 198 to 210; these read SGLSSLNLSPLG and RSSS…GPSR. Positions 168 to 230 are disordered; it reads SGLSSLNLSP…ATSPSVSHHN (63 aa). Residues serine 213 and serine 586 each carry the phosphoserine modification. The span at 605–614 shows a compositional bias: polar residues; it reads TRNSRQFNRN. Disordered regions lie at residues 605–627 and 651–820; these read TRNS…IFNS and PLSP…FAHS. The span at 669 to 694 shows a compositional bias: low complexity; the sequence is FDFSSDFISDAASGTTTTEVSSSESS. Positions 734 to 785 are enriched in basic and acidic residues; sequence KNSDKNSSETLNKKESMSKIEENKHKRETTPKKRENRDVKSLSTPQREESKD. Positions 802–811 are enriched in low complexity; sequence LSLSSSLHSS. Phosphoserine occurs at positions 826 and 838. The disordered stretch occupies residues 868–889; sequence NHDKNELNRHSTNTSSTPASAR. A compositionally biased stretch (polar residues) spans 877 to 889; sequence HSTNTSSTPASAR. Serine 900 carries the phosphoserine modification. A disordered region spans residues 986–1017; the sequence is QNSAESDHNNDIFTQGSGLTESSKNSDSEERF. The segment covering 996–1008 has biased composition (polar residues); sequence DIFTQGSGLTESS. Serine 1022 and serine 1023 each carry phosphoserine.

This sequence belongs to the ALY1 family. As to quaternary structure, interacts with PCL6, PCL7 and RSP5. Post-translationally, ubiquitinated by RSP5. Phosphorylated by the cyclin-CDKs PCL6-PHO85 and PCL7-PHO85.

It is found in the cytoplasm. May regulate endocytosis by recruiting RSP5 ubiquitin ligase activity to specific plasma membrane proteins in response to extracellular stimuli. The protein is Arrestin-related trafficking adapter 3 (ALY2) of Saccharomyces cerevisiae (strain ATCC 204508 / S288c) (Baker's yeast).